A 513-amino-acid polypeptide reads, in one-letter code: ATP synthase subunit alpha (513 aa).

Gly169 to Thr176 provides a ligand contact to ATP.

This sequence belongs to the ATPase alpha/beta chains family. In terms of assembly, F-type ATPases have 2 components, CF(1) - the catalytic core - and CF(0) - the membrane proton channel. CF(1) has five subunits: alpha(3), beta(3), gamma(1), delta(1), epsilon(1). CF(0) has three main subunits: a(1), b(2) and c(9-12). The alpha and beta chains form an alternating ring which encloses part of the gamma chain. CF(1) is attached to CF(0) by a central stalk formed by the gamma and epsilon chains, while a peripheral stalk is formed by the delta and b chains.

The protein resides in the cell inner membrane. The catalysed reaction is ATP + H2O + 4 H(+)(in) = ADP + phosphate + 5 H(+)(out). Its function is as follows. Produces ATP from ADP in the presence of a proton gradient across the membrane. The alpha chain is a regulatory subunit. The polypeptide is ATP synthase subunit alpha (Bordetella petrii (strain ATCC BAA-461 / DSM 12804 / CCUG 43448)).